The following is a 283-amino-acid chain: NADPH-dependent 3-dehydrocapnine reductase (283 aa).

Tyrosine 153 functions as the Proton acceptor in the catalytic mechanism.

The protein belongs to the short-chain dehydrogenases/reductases (SDR) family.

The catalysed reaction is 3-oxocapnine + NADPH + H(+) = capnine + NADP(+). It participates in lipid metabolism. Its function is as follows. Reductase involved in the biosynthesis of capnine, a sulfonolipid present in the outer membrane of gliding Bacteroidetes and essential for gliding motility. Catalyzes the reduction of 3-dehydrocapnine to capnine. This Ornithobacterium rhinotracheale protein is NADPH-dependent 3-dehydrocapnine reductase.